Reading from the N-terminus, the 2290-residue chain is Autophagy-related protein 2 (2290 aa).

The Chorein N-terminal domain occupies W10–F99. Residues D829 to V1549 are required for epg-6 binding. 4 disordered regions span residues I1678 to L1727, D1805 to G1851, S1898 to N1919, and E1967 to K2003. Positions K1681 to S1692 are enriched in low complexity. Residues R1714–P1723 show a composition bias toward pro residues. A compositionally biased stretch (low complexity) spans Q1810–Q1830. Residues L1972–R2011 adopt a coiled-coil conformation. The segment covering E1988 to E1999 has biased composition (acidic residues).

It belongs to the ATG2 family. Interacts with epg-6; the interaction is direct.

The protein localises to the preautophagosomal structure membrane. The protein resides in the lipid droplet. It localises to the endoplasmic reticulum membrane. Its subcellular location is the cytoplasm. It carries out the reaction a 1,2-diacyl-sn-glycero-3-phospho-L-serine(in) = a 1,2-diacyl-sn-glycero-3-phospho-L-serine(out). The catalysed reaction is a 1,2-diacyl-sn-glycero-3-phosphoethanolamine(in) = a 1,2-diacyl-sn-glycero-3-phosphoethanolamine(out). Functionally, lipid transfer protein involved in autophagosome assembly and in the distribution of atg-9 and atg-13 during the autophagy-mediated degradation of protein aggregates. Tethers the edge of the isolation membrane (IM) to the endoplasmic reticulum (ER) and mediates direct lipid transfer from ER to IM for IM expansion. Binds to the ER exit site (ERES), which is the membrane source for autophagosome formation, and extracts phospholipids from the membrane source to the IM for membrane expansion. Involved in autophagy-mediated degradation of ribosomal RNA and ribosomal proteins in lysosomes, which is essential for maintaining nucleotide homeostasis. This is Autophagy-related protein 2 from Caenorhabditis elegans.